We begin with the raw amino-acid sequence, 173 residues long: Cytochrome c-type biogenesis protein CcmE (173 aa).

Topologically, residues 1–8 (MMSRKKRR) are cytoplasmic. Residues 9 to 29 (LWIVIACGIGLSTAVALMLFA) form a helical; Signal-anchor for type II membrane protein membrane-spanning segment. At 30–173 (FRSSLSFFMS…PAQIEASNNG (144 aa)) the chain is on the periplasmic side. 2 residues coordinate heme: H127 and Y131. Residues 145 to 173 (KWNPKFGPPPNAGAWDDKSPAQIEASNNG) are disordered.

Belongs to the CcmE/CycJ family.

It localises to the cell inner membrane. In terms of biological role, heme chaperone required for the biogenesis of c-type cytochromes. Transiently binds heme delivered by CcmC and transfers the heme to apo-cytochromes in a process facilitated by CcmF and CcmH. The chain is Cytochrome c-type biogenesis protein CcmE from Acidiphilium cryptum (strain JF-5).